Consider the following 37-residue polypeptide: Non-specific lipid-transfer protein (37 aa).

Belongs to the plant LTP family.

Functionally, plant non-specific lipid-transfer proteins transfer phospholipids as well as galactolipids across membranes. May play a role in wax or cutin deposition in the cell walls of expanding epidermal cells and certain secretory tissues. The polypeptide is Non-specific lipid-transfer protein (Artemisia vulgaris (Mugwort)).